We begin with the raw amino-acid sequence, 347 residues long: Holliday junction branch migration complex subunit RuvB (347 aa).

The interval 1-181 (MTRNSLLNPE…FGIPVRLQFY (181 aa)) is large ATPase domain (RuvB-L). ATP contacts are provided by Leu-20, Arg-21, Gly-62, Lys-65, Thr-66, Thr-67, Arg-171, Tyr-181, and Arg-218. Thr-66 serves as a coordination point for Mg(2+). The interval 182 to 252 (SIEELRQVIT…IADEALNRLE (71 aa)) is small ATPAse domain (RuvB-S). The head domain (RuvB-H) stretch occupies residues 255-347 (KLGLDLMDRR…SEIKNQPGLL (93 aa)). Arg-291, Arg-310, and Arg-315 together coordinate DNA.

This sequence belongs to the RuvB family. As to quaternary structure, homohexamer. Forms an RuvA(8)-RuvB(12)-Holliday junction (HJ) complex. HJ DNA is sandwiched between 2 RuvA tetramers; dsDNA enters through RuvA and exits via RuvB. An RuvB hexamer assembles on each DNA strand where it exits the tetramer. Each RuvB hexamer is contacted by two RuvA subunits (via domain III) on 2 adjacent RuvB subunits; this complex drives branch migration. In the full resolvosome a probable DNA-RuvA(4)-RuvB(12)-RuvC(2) complex forms which resolves the HJ.

The protein localises to the cytoplasm. It carries out the reaction ATP + H2O = ADP + phosphate + H(+). Its function is as follows. The RuvA-RuvB-RuvC complex processes Holliday junction (HJ) DNA during genetic recombination and DNA repair, while the RuvA-RuvB complex plays an important role in the rescue of blocked DNA replication forks via replication fork reversal (RFR). RuvA specifically binds to HJ cruciform DNA, conferring on it an open structure. The RuvB hexamer acts as an ATP-dependent pump, pulling dsDNA into and through the RuvAB complex. RuvB forms 2 homohexamers on either side of HJ DNA bound by 1 or 2 RuvA tetramers; 4 subunits per hexamer contact DNA at a time. Coordinated motions by a converter formed by DNA-disengaged RuvB subunits stimulates ATP hydrolysis and nucleotide exchange. Immobilization of the converter enables RuvB to convert the ATP-contained energy into a lever motion, pulling 2 nucleotides of DNA out of the RuvA tetramer per ATP hydrolyzed, thus driving DNA branch migration. The RuvB motors rotate together with the DNA substrate, which together with the progressing nucleotide cycle form the mechanistic basis for DNA recombination by continuous HJ branch migration. Branch migration allows RuvC to scan DNA until it finds its consensus sequence, where it cleaves and resolves cruciform DNA. In Zymomonas mobilis subsp. mobilis (strain ATCC 31821 / ZM4 / CP4), this protein is Holliday junction branch migration complex subunit RuvB.